The sequence spans 349 residues: AA9 family lytic polysaccharide monooxygenase C (349 aa).

The first 19 residues, 1–19 (MKSTFGLLALAAAAKLVSA), serve as a signal peptide directing secretion. Positions 20 and 102 each coordinate Cu(2+). Cys-62 and Cys-183 form a disulfide bridge. His-169 contacts O2. Residue Tyr-180 coordinates Cu(2+). A disordered region spans residues 233–304 (DGSSSGSSGS…SGSNSGSDSC (72 aa)). 2 stretches are compositionally biased toward low complexity: residues 234 to 262 (GSSS…AAPT) and 269 to 304 (TSAT…SDSC). The CBM1 domain occupies 311 to 347 (GSVKIYGQCGGQNYSGPTSCEAGLICKEWNPYYHQCV). Intrachain disulfides connect Cys-319–Cys-336 and Cys-330–Cys-346. N-linked (GlcNAc...) asparagine glycosylation is present at Asn-323.

This sequence belongs to the polysaccharide monooxygenase AA9 family. Cu(2+) serves as cofactor.

Its subcellular location is the secreted. The catalysed reaction is [(1-&gt;4)-beta-D-glucosyl]n+m + reduced acceptor + O2 = 4-dehydro-beta-D-glucosyl-[(1-&gt;4)-beta-D-glucosyl]n-1 + [(1-&gt;4)-beta-D-glucosyl]m + acceptor + H2O.. Functionally, lytic polysaccharide monooxygenase (LPMO) that depolymerizes crystalline and amorphous polysaccharides via the oxidation of scissile alpha- or beta-(1-4)-glycosidic bonds, yielding C4 oxidation products. Catalysis by LPMOs requires the reduction of the active-site copper from Cu(II) to Cu(I) by a reducing agent and H(2)O(2) or O(2) as a cosubstrate. Active on cellulose and cello-oligosaccharides, as well as plant cell wall-derived hemicellulosic polysaccharides. Also active on cello-oligosaccharides such as cellohexaose, cellopentaose or cellotetraose. The polypeptide is AA9 family lytic polysaccharide monooxygenase C (Aspergillus fumigatus (strain ATCC MYA-4609 / CBS 101355 / FGSC A1100 / Af293) (Neosartorya fumigata)).